We begin with the raw amino-acid sequence, 110 residues long: Large ribosomal subunit protein uL22 (110 aa).

This sequence belongs to the universal ribosomal protein uL22 family. In terms of assembly, part of the 50S ribosomal subunit.

Functionally, this protein binds specifically to 23S rRNA; its binding is stimulated by other ribosomal proteins, e.g. L4, L17, and L20. It is important during the early stages of 50S assembly. It makes multiple contacts with different domains of the 23S rRNA in the assembled 50S subunit and ribosome. In terms of biological role, the globular domain of the protein is located near the polypeptide exit tunnel on the outside of the subunit, while an extended beta-hairpin is found that lines the wall of the exit tunnel in the center of the 70S ribosome. The polypeptide is Large ribosomal subunit protein uL22 (Syntrophotalea carbinolica (strain DSM 2380 / NBRC 103641 / GraBd1) (Pelobacter carbinolicus)).